We begin with the raw amino-acid sequence, 441 residues long: 3-oxo-glucose-6-phosphate:glutamate aminotransferase (441 aa).

Substrate is bound at residue 98-99 (TS). 125-126 (GT) contacts pyridoxal 5'-phosphate. Substrate is bound at residue Phe-151. Pyridoxal 5'-phosphate-binding residues include Gln-225 and Ser-242. 244–246 (NPY) provides a ligand contact to substrate. Lys-247 is subject to N6-(pyridoxal phosphate)lysine. The substrate site is built by Tyr-274 and Lys-282. Asn-292 provides a ligand contact to pyridoxal 5'-phosphate. Tyr-379 is a substrate binding site.

It belongs to the DegT/DnrJ/EryC1 family. As to quaternary structure, homodimer. It depends on pyridoxal 5'-phosphate as a cofactor.

The catalysed reaction is 3-dehydro-D-glucose 6-phosphate + L-glutamate = D-kanosamine 6-phosphate + 2-oxoglutarate. It functions in the pathway antibiotic biosynthesis; kanosamine biosynthesis. Functionally, involved in the biosynthesis of kanosamine (3-amino-3-deoxy-D-glucose), which is known to have antibiotic and antifungal properties, and to be a precursor of the antibiotic neotrehalosadiamine (3,3'-diamino-3,3'-dideoxy-alpha,beta-trehalose (NTD)). Catalyzes the reversible pyridoxal phosphate-dependent transamination of 3-dehydro-alpha-D-glucose 6-phosphate to form alpha-D-kanosamine-6-phosphate. It can only use alpha-anomer and glutamate is the only amino donor. In Bacillus subtilis (strain 168), this protein is 3-oxo-glucose-6-phosphate:glutamate aminotransferase (ntdA).